Consider the following 295-residue polypeptide: Pyridoxal 5'-phosphate synthase subunit PdxS (295 aa).

D25 is a D-ribose 5-phosphate binding site. The active-site Schiff-base intermediate with D-ribose 5-phosphate is K82. G154 is a D-ribose 5-phosphate binding site. R166 is a D-glyceraldehyde 3-phosphate binding site. Residues G215 and 236 to 237 (GS) each bind D-ribose 5-phosphate.

The protein belongs to the PdxS/SNZ family. In terms of assembly, in the presence of PdxT, forms a dodecamer of heterodimers.

It carries out the reaction aldehydo-D-ribose 5-phosphate + D-glyceraldehyde 3-phosphate + L-glutamine = pyridoxal 5'-phosphate + L-glutamate + phosphate + 3 H2O + H(+). Its pathway is cofactor biosynthesis; pyridoxal 5'-phosphate biosynthesis. Functionally, catalyzes the formation of pyridoxal 5'-phosphate from ribose 5-phosphate (RBP), glyceraldehyde 3-phosphate (G3P) and ammonia. The ammonia is provided by the PdxT subunit. Can also use ribulose 5-phosphate and dihydroxyacetone phosphate as substrates, resulting from enzyme-catalyzed isomerization of RBP and G3P, respectively. The chain is Pyridoxal 5'-phosphate synthase subunit PdxS from Listeria innocua serovar 6a (strain ATCC BAA-680 / CLIP 11262).